The sequence spans 153 residues: Pheromone-binding protein Gp-9 (153 aa).

Residues 1–19 form the signal peptide; it reads MKTFVLHIFIFALVAFASA. Disulfide bonds link cysteine 37–cysteine 77, cysteine 73–cysteine 129, and cysteine 118–cysteine 138.

This sequence belongs to the PBP/GOBP family. As to quaternary structure, homodimer.

It is found in the secreted. Its function is as follows. Colony queen number, a major feature of social organization, is associated with worker genotype for Gp-9. Colonies are headed by either a single reproductive queen (monogyne form) or multiple queens (polygyne form). Differences in worker Gp-9 genotypes between social forms may cause differences in workers' abilities to recognize queens and regulate their numbers. This Solenopsis tridens (Fire ant) protein is Pheromone-binding protein Gp-9.